A 782-amino-acid chain; its full sequence is Sulfate permease family protein 3 (782 aa).

Transmembrane regions (helical) follow at residues tyrosine 30–proline 52, leucine 64–isoleucine 84, glycine 86–phenylalanine 106, alanine 113–leucine 133, isoleucine 196–phenylalanine 216, glycine 232–isoleucine 252, leucine 274–phenylalanine 294, tryptophan 302–isoleucine 322, histidine 359–alanine 379, alanine 398–phenylalanine 418, leucine 433–leucine 453, and phenylalanine 497–valine 517. In terms of domain architecture, STAS spans lysine 546 to alanine 700. Residues isoleucine 728 to glutamate 742 show a composition bias toward acidic residues. The interval isoleucine 728–glutamate 782 is disordered. The span at aspartate 767–glutamate 782 shows a compositional bias: polar residues.

It belongs to the SLC26A/SulP transporter (TC 2.A.53) family.

The protein localises to the membrane. Possible sulfate transporter. This chain is Sulfate permease family protein 3 (sulp-3), found in Caenorhabditis elegans.